A 167-amino-acid chain; its full sequence is Modulator of smoothened protein (167 aa).

4 consecutive transmembrane segments (helical) span residues 7–29, 68–88, 101–121, and 139–159; these read ISGC…PDWI, TLFF…LLVI, WIAF…PVGF, and VGSS…GLLF.

The protein localises to the cell projection. It is found in the cilium membrane. It localises to the cell membrane. Functionally, acts as a negative regulator of hedgehog signaling probably by promoting internalization and subsequent degradation of smoothened protein (SMO) present in the ciliary membrane. Plays a role in sonic hedgehog (SHH)-induced spinal neural progenitor cells differentiation. The protein is Modulator of smoothened protein of Danio rerio (Zebrafish).